Reading from the N-terminus, the 272-residue chain is Glutamate racemase (272 aa).

Substrate contacts are provided by residues 16-17 (DS) and 48-49 (YG). Cys79 functions as the Proton donor/acceptor in the catalytic mechanism. Residue 80–81 (NT) coordinates substrate. The active-site Proton donor/acceptor is Cys191. 192–193 (TH) is a binding site for substrate.

The protein belongs to the aspartate/glutamate racemases family.

It carries out the reaction L-glutamate = D-glutamate. The protein operates within cell wall biogenesis; peptidoglycan biosynthesis. Functionally, provides the (R)-glutamate required for cell wall biosynthesis. The chain is Glutamate racemase from Chlorobaculum tepidum (strain ATCC 49652 / DSM 12025 / NBRC 103806 / TLS) (Chlorobium tepidum).